The primary structure comprises 1286 residues: Protein patched (1286 aa).

Topologically, residues 1 to 76 are cytoplasmic; the sequence is MDRDSLPRVP…GSSVQKHAGK (76 aa). Residues 77 to 92 traverse the membrane as a helical segment; that stretch reads VLFVAILVLSTFCVGL. The Extracellular segment spans residues 93–427; sequence KSAQIHSKVH…DDILAKFSHP (335 aa). N-linked (GlcNAc...) asparagine glycosylation is found at Asn142, Asn298, Asn335, and Asn388. Residues 428-448 traverse the membrane as a helical segment; it reads SALSIVIGVAVTVLYAFCTLL. In terms of domain architecture, SSD spans 428-583; it reads SALSIVIGVA…LLVFPAMISL (156 aa). Residues 449–465 are Cytoplasmic-facing; sequence RWRDPVRGQSSVGVAGV. The chain crosses the membrane as a helical span at residues 466 to 486; the sequence is LLMCFSTAAGLGLSALLGIVF. The Extracellular portion of the chain corresponds to 487 to 492; that stretch reads NAASTQ. Residues 493–511 traverse the membrane as a helical segment; sequence VVPFLALGLGVDHIFMLTA. The Cytoplasmic segment spans residues 512–532; that stretch reads AYAESNRREQTKLILKKVGPS. A helical transmembrane segment spans residues 533-553; that stretch reads ILFSACSTAGSFFAAAFIPVP. Residues 554–562 are Extracellular-facing; it reads ALKVFCLQA. Residues 563–583 traverse the membrane as a helical segment; it reads AIVMCSNLAAALLVFPAMISL. Residues 584 to 677 lie on the Cytoplasmic side of the membrane; sequence DLRRRTAGRA…QHYTPFLMRS (94 aa). Residues 678–699 traverse the membrane as a helical segment; it reads WVKFLTVMGFLAALISSLYAST. At 700–931 the chain is on the extracellular side; it reads RLQDGLDIID…IRDLSVKYEG (232 aa). Residue Asn807 is glycosylated (N-linked (GlcNAc...) asparagine). Residues 932–952 traverse the membrane as a helical segment; that stretch reads FGLPNYPSGIPFIFWEQYMTL. The Cytoplasmic portion of the chain corresponds to 953-955; it reads RSS. The helical transmembrane segment at 956–976 threads the bilayer; it reads LAMILACVLLAALVLVSLLLL. The Extracellular segment spans residues 977-1007; that stretch reads SVWAAVLVILSVLASLAQIFGAMTLLGIKLS. A helical membrane pass occupies residues 1008–1028; it reads AIPAVILILSVGMMLCFNVLI. At 1029 to 1056 the chain is on the cytoplasmic side; sequence SLGFMTSVGNRQRRVQLSMQMSLGPLVH. A helical membrane pass occupies residues 1057–1077; that stretch reads GMLTSGVAVFMLSTSPFEFVI. Residues 1078–1082 lie on the Extracellular side of the membrane; it reads RHFCW. Residues 1083–1103 traverse the membrane as a helical segment; that stretch reads LLLVVLCVGACNSLLVFPILL. The Cytoplasmic segment spans residues 1104 to 1286; sequence SMVGPEAELV…RAVRSYNFTS (183 aa). Residues 1116–1237 form a disordered region; sequence EHPDRISTPS…PPPFPTAYPP (122 aa). 2 stretches are compositionally biased toward polar residues: residues 1141-1152 and 1165-1191; these read VQGSRSSRGSCQ and PSLTTITEEPQSWKSSNSSIQMPNDWT. Low complexity predominate over residues 1199-1216; that stretch reads PASYAAPPPAYHKAAAQQ. A compositionally biased stretch (pro residues) spans 1224 to 1235; sequence PTTPPPPFPTAY.

It belongs to the patched family. As to quaternary structure, interacts (via C-terminal cytoplasmic region) with CG5504/l(2)tid; the interaction is probably direct. Interacts with hh/hedgehog.

It localises to the membrane. In terms of biological role, segmentation polarity protein. Acts as a receptor for the hedgehog protein (hh). Associates with the smoothened protein (SMO) to transduce the hedgehog signal leading to the activation of wingless, decapentaplegic and patched itself. Participates in cell interactions that establish pattern within the segment and the imaginal disks during development. In the absence of HH, represses the constitutive signaling activity of smo through fused (FU). This Drosophila melanogaster (Fruit fly) protein is Protein patched.